The chain runs to 551 residues: uncharacterized protein (551 aa).

Residues Met1 to Trp36 constitute a mitochondrion transit peptide. Residues Thr203–Glu315 are a coiled coil. Positions Arg354–Lys389 are disordered. Residues Pro366–Gly384 show a composition bias toward polar residues. Residues Lys405–Ser439 adopt a coiled-coil conformation. The interval Leu519–Asp551 is disordered. The segment covering Met541–Asp551 has biased composition (polar residues).

In terms of assembly, interacts with NOD2.

The protein resides in the mitochondrion. This is an uncharacterized protein from Homo sapiens (Human).